The primary structure comprises 280 residues: 4-diphosphocytidyl-2-C-methyl-D-erythritol kinase (280 aa).

K11 is an active-site residue. 95–105 lines the ATP pocket; the sequence is PVGAGLGGGSS. Residue D137 is part of the active site.

It belongs to the GHMP kinase family. IspE subfamily.

The catalysed reaction is 4-CDP-2-C-methyl-D-erythritol + ATP = 4-CDP-2-C-methyl-D-erythritol 2-phosphate + ADP + H(+). It functions in the pathway isoprenoid biosynthesis; isopentenyl diphosphate biosynthesis via DXP pathway; isopentenyl diphosphate from 1-deoxy-D-xylulose 5-phosphate: step 3/6. Functionally, catalyzes the phosphorylation of the position 2 hydroxy group of 4-diphosphocytidyl-2C-methyl-D-erythritol. The protein is 4-diphosphocytidyl-2-C-methyl-D-erythritol kinase of Citrifermentans bemidjiense (strain ATCC BAA-1014 / DSM 16622 / JCM 12645 / Bem) (Geobacter bemidjiensis).